The following is an 862-amino-acid chain: Phosphofurin acidic cluster sorting protein 2 (862 aa).

3 disordered regions span residues 151–215 (HEDS…TTSM), 263–436 (LDVE…TRSQ), and 658–713 (SSAT…SQGV). Over residues 263 to 272 (LDVENPSDSG) the composition is skewed to low complexity. Residues 313–328 (SHREPPSPADVPEKTR) are compositionally biased toward basic and acidic residues. Over residues 332–344 (GKQQLSDSVSDTV) the composition is skewed to polar residues. Phosphoserine is present on residues Ser-361, Ser-387, Ser-424, Ser-662, and Ser-665. Composition is skewed to low complexity over residues 658–693 (SSAT…KEAS) and 700–710 (PSVSGGLSSPS).

The protein belongs to the PACS family. Interacts with BID and PKD2. Interacts with SIRT1. Interacts with HDAC1. Interacts with TRPV1. Interacts with WDR37.

It localises to the endoplasmic reticulum. The protein resides in the mitochondrion. Its function is as follows. Multifunctional sorting protein that controls the endoplasmic reticulum (ER)-mitochondria communication, including the apposition of mitochondria with the ER and ER homeostasis. In addition, in response to apoptotic inducer, translocates BIB to mitochondria, which initiates a sequence of events including the formation of mitochondrial truncated BID, the release of cytochrome c, the activation of caspase-3 thereby causing cell death. May also involved in ion channel trafficking, directing acidic cluster-containing ion channels to distinct subcellular compartments. This is Phosphofurin acidic cluster sorting protein 2 (Pacs2) from Mus musculus (Mouse).